The chain runs to 589 residues: Coronatine-insensitive protein homolog 2 (589 aa).

The F-box domain maps to 18 to 59 (IPDVALGLVMGFVEDPWDRDAISLVCRHWCRVDALSRKHVTV). Residues Arg87, Arg352, Arg414, and Arg501 each coordinate jasmonate.

In terms of assembly, interacts with TIFY9/JAZ5, TIFY11C/JAZ11 and TIFY11D/JAZ12 in a coronatine-dependent manner.

Involved in jasmonate (JA) signaling. Required for jasmonate signaling in plant defense responses. Component of SCF(COI1) E3 ubiquitin ligase complexes, which may mediate the ubiquitination and subsequent proteasomal degradation of target proteins, including TIFY/JAZ family. The polypeptide is Coronatine-insensitive protein homolog 2 (Oryza sativa subsp. indica (Rice)).